We begin with the raw amino-acid sequence, 148 residues long: Sperm-specific protein PHI-2B (148 aa).

The segment covering 1 to 35 has biased composition (basic residues); it reads PSPSRRSRSRSRSRSKSPKRSPAKKARKTPKKRRA. 2 disordered regions span residues 1-44 and 97-148; these read PSPS…KPST and GVLV…KSNN. The H15 domain occupies 40–119; the sequence is KKPSTLSMIV…GATGSFRVGK (80 aa). Residues 124–148 are compositionally biased toward basic residues; it reads PKKKAKKAKSPKKKSSKKSSNKSNN.

Belongs to the histone H1/H5 family. In terms of tissue distribution, sperm.

Its subcellular location is the nucleus. The protein resides in the chromosome. Linker histones are implicated in chromatin remodeling and/or transcriptional regulation during spermiogenesis, the process of spermatid maturation into spermatozoa. In Mytilus californianus (California mussel), this protein is Sperm-specific protein PHI-2B.